Reading from the N-terminus, the 138-residue chain is UPF0201 protein PH1010 (138 aa).

It belongs to the UPF0201 family.

The sequence is that of UPF0201 protein PH1010 from Pyrococcus horikoshii (strain ATCC 700860 / DSM 12428 / JCM 9974 / NBRC 100139 / OT-3).